The sequence spans 298 residues: MNELIEKAKVLQEALPYIREFHGKVFVIKYGGSAMHDEELRESFARDVVLLKYVGINPVIVHGGGPQISKTLEKFGIKPKFVGGMRKTDEETMHVVEMVLSGDINKDIVALINRYSGEKIYAVGLSGRDGRLLKAKKLDKERYFSELGLPVPEEDIGFVGEIVDVNEELIFTLLSHNFIPVIAPVGVGEEGEAYNVNADLAASEIAGEIKAEKLIYLTDTKGVLDEKGELISSLSKDKAEELIKKGVIREGMIPKVRSALRALEKGVKKVHIIDGRVKHSILLEVFTKEGVGTEITLE.

Substrate contacts are provided by residues 64–65 (GG), R86, and N195.

The protein belongs to the acetylglutamate kinase family. ArgB subfamily.

Its subcellular location is the cytoplasm. The enzyme catalyses N-acetyl-L-glutamate + ATP = N-acetyl-L-glutamyl 5-phosphate + ADP. The protein operates within amino-acid biosynthesis; L-arginine biosynthesis; N(2)-acetyl-L-ornithine from L-glutamate: step 2/4. Catalyzes the ATP-dependent phosphorylation of N-acetyl-L-glutamate. In Aquifex aeolicus (strain VF5), this protein is Acetylglutamate kinase.